Consider the following 293-residue polypeptide: 4-diphosphocytidyl-2-C-methyl-D-erythritol kinase (293 aa).

Residue lysine 10 is part of the active site. 94-104 (PVSAGLAGGSS) lines the ATP pocket. Residue aspartate 136 is part of the active site.

Belongs to the GHMP kinase family. IspE subfamily.

The enzyme catalyses 4-CDP-2-C-methyl-D-erythritol + ATP = 4-CDP-2-C-methyl-D-erythritol 2-phosphate + ADP + H(+). It functions in the pathway isoprenoid biosynthesis; isopentenyl diphosphate biosynthesis via DXP pathway; isopentenyl diphosphate from 1-deoxy-D-xylulose 5-phosphate: step 3/6. Its function is as follows. Catalyzes the phosphorylation of the position 2 hydroxy group of 4-diphosphocytidyl-2C-methyl-D-erythritol. In Listeria monocytogenes serotype 4b (strain CLIP80459), this protein is 4-diphosphocytidyl-2-C-methyl-D-erythritol kinase.